The following is a 232-amino-acid chain: RNA chaperone ProQ (232 aa).

Positions 105-182 (EAKARVQAQR…REEQHTPVSD (78 aa)) are disordered. Over residues 117–136 (QQAKKREAAAAAGEKEDAPR) the composition is skewed to basic and acidic residues. Residues 137 to 146 (RERKPRPTTP) show a composition bias toward basic residues. Residues 147 to 177 (RRKEGAERKPRAQKSVEKAPKTVKAPREEQH) show a composition bias toward basic and acidic residues.

This sequence belongs to the ProQ family.

Its subcellular location is the cytoplasm. In terms of biological role, RNA chaperone with significant RNA binding, RNA strand exchange and RNA duplexing activities. May regulate ProP activity through an RNA-based, post-transcriptional mechanism. The sequence is that of RNA chaperone ProQ from Escherichia coli O7:K1 (strain IAI39 / ExPEC).